The sequence spans 115 residues: Probable non-functional T cell receptor beta variable 7-3 (115 aa).

The signal sequence occupies residues 1 to 21 (MGTRLLCWAALCLLGADHTGA). The Ig-like domain maps to 22-115 (GVSQTPSNKV…SAAYLRASSL (94 aa)).

As to quaternary structure, most probably, the alpha-beta TR is not assembled due to incorrect folding of the beta chain. Alpha-beta TR is a heterodimer composed of an alpha and beta chain; disulfide-linked. The alpha-beta TR is associated with the transmembrane signaling CD3 coreceptor proteins to form the TR-CD3 (TcR or TCR). The assembly of alpha-beta TR heterodimers with CD3 occurs in the endoplasmic reticulum where a single alpha-beta TR heterodimer associates with one CD3D-CD3E heterodimer, one CD3G-CD3E heterodimer and one CD247 homodimer forming a stable octameric structure. CD3D-CD3E and CD3G-CD3E heterodimers preferentially associate with TR alpha and TR beta chains, respectively. The association of the CD247 homodimer is the last step of TcR assembly in the endoplasmic reticulum and is required for transport to the cell surface.

The protein localises to the cell membrane. Its function is as follows. Probable non-functional open reading frame (ORF) of V region of the variable domain of T cell receptor (TR) beta chain. Non-functional ORF generally cannot participate in the synthesis of a productive T cell receptor (TR) chain due to altered V-(D)-J or switch recombination and/or splicing site (at mRNA level) and/or conserved amino acid change (protein level). Alpha-beta T cell receptors are antigen specific receptors which are essential to the immune response and are present on the cell surface of T lymphocytes. Recognize peptide-major histocompatibility (MH) (pMH) complexes that are displayed by antigen presenting cells (APC), a prerequisite for efficient T cell adaptive immunity against pathogens. Binding of alpha-beta TR to pMH complex initiates TR-CD3 clustering on the cell surface and intracellular activation of LCK that phosphorylates the ITAM motifs of CD3G, CD3D, CD3E and CD247 enabling the recruitment of ZAP70. In turn ZAP70 phosphorylates LAT, which recruits numerous signaling molecules to form the LAT signalosome. The LAT signalosome propagates signal branching to three major signaling pathways, the calcium, the mitogen-activated protein kinase (MAPK) kinase and the nuclear factor NF-kappa-B (NF-kB) pathways, leading to the mobilization of transcription factors that are critical for gene expression and essential for T cell growth and differentiation. The T cell repertoire is generated in the thymus, by V-(D)-J rearrangement. This repertoire is then shaped by intrathymic selection events to generate a peripheral T cell pool of self-MH restricted, non-autoaggressive T cells. Post-thymic interaction of alpha-beta TR with the pMH complexes shapes TR structural and functional avidity. The polypeptide is Probable non-functional T cell receptor beta variable 7-3 (Homo sapiens (Human)).